Here is a 99-residue protein sequence, read N- to C-terminus: Integration host factor subunit alpha (99 aa).

The protein belongs to the bacterial histone-like protein family. As to quaternary structure, heterodimer of an alpha and a beta chain.

This protein is one of the two subunits of integration host factor, a specific DNA-binding protein that functions in genetic recombination as well as in transcriptional and translational control. The protein is Integration host factor subunit alpha (ihfA) of Xylella fastidiosa (strain 9a5c).